Consider the following 352-residue polypeptide: Putative [LysW]-L-2-aminoadipate 6-phosphate reductase (352 aa).

S11 to T14 contacts NADP(+). C148 is a catalytic residue. N319 is a binding site for NADP(+).

It belongs to the NAGSA dehydrogenase family. Type 1 subfamily. LysY sub-subfamily.

The protein resides in the cytoplasm. It catalyses the reaction [amino-group carrier protein]-C-terminal-N-(1-carboxy-5-oxopentan-1-yl)-L-glutamine + phosphate + NADP(+) = [amino-group carrier protein]-C-terminal-N-(1-carboxy-5-phosphooxy-5-oxopentan-1-yl)-L-glutamine + NADPH + H(+). Its pathway is amino-acid biosynthesis; L-lysine biosynthesis via AAA pathway; L-lysine from L-alpha-aminoadipate (Thermus route): step 3/5. In terms of biological role, catalyzes the NADPH-dependent reduction of [LysW]-aminoadipate 6-phosphate to yield [LysW]-aminoadipate 6-semialdehyde. The protein is Putative [LysW]-L-2-aminoadipate 6-phosphate reductase of Thermomicrobium roseum (strain ATCC 27502 / DSM 5159 / P-2).